The following is a 137-amino-acid chain: uncharacterized protein (137 aa).

This is an uncharacterized protein from Schizosaccharomyces pombe (strain 972 / ATCC 24843) (Fission yeast).